Reading from the N-terminus, the 136-residue chain is Protein BUNDLE SHEATH DEFECTIVE 2, chloroplastic (136 aa).

Residues 1–56 (MANSLCFFSSPPTFCFQSPSKNPKPSHFFSTNDNTSSLVQKRELLQTSRSQSFEVK) constitute a chloroplast transit peptide. A CR-type zinc finger spans residues 62–133 (PQGTKPNSLV…AGFIGGFLST (72 aa)). Zn(2+)-binding residues include C72, C75, E78, C80, C83, C86, C107, C110, E115, C118, and C121.

Belongs to the BSD2 chaperone family. Interacts with the RuBisCo large subunit (RbcL) assembled as an intermediate complex made of eight RbcL and eight BSD2 subunits.

It localises to the plastid. The protein resides in the chloroplast stroma. Chloroplast chaperone required for RuBisCo biogenesis and translational regulation of the RuBisCo large subunit (RbcL). Stabilizes an end-state assembly intermediate of eight RbcL subunits until the small subunits (RBCSs) become available to produce a complete stable RuBisCo complex containing eight small and eight large subunits. The polypeptide is Protein BUNDLE SHEATH DEFECTIVE 2, chloroplastic (Arabidopsis thaliana (Mouse-ear cress)).